A 526-amino-acid polypeptide reads, in one-letter code: Peptide chain release factor 3 (526 aa).

A tr-type G domain is found at Asn8–Gln277. Residues Ser17 to Thr24, Asp85 to His89, and Asn139 to Asp142 each bind GTP.

This sequence belongs to the TRAFAC class translation factor GTPase superfamily. Classic translation factor GTPase family. PrfC subfamily.

It is found in the cytoplasm. Increases the formation of ribosomal termination complexes and stimulates activities of RF-1 and RF-2. It binds guanine nucleotides and has strong preference for UGA stop codons. It may interact directly with the ribosome. The stimulation of RF-1 and RF-2 is significantly reduced by GTP and GDP, but not by GMP. The polypeptide is Peptide chain release factor 3 (Actinobacillus pleuropneumoniae serotype 5b (strain L20)).